The chain runs to 333 residues: Fructose-1,6-bisphosphatase class 1 (333 aa).

Mg(2+) contacts are provided by glutamate 90, aspartate 112, leucine 114, and aspartate 115. Residues aspartate 115–serine 118, asparagine 207, and lysine 273 each bind substrate. Glutamate 279 contributes to the Mg(2+) binding site.

The protein belongs to the FBPase class 1 family. As to quaternary structure, homotetramer. The cofactor is Mg(2+).

It is found in the cytoplasm. The enzyme catalyses beta-D-fructose 1,6-bisphosphate + H2O = beta-D-fructose 6-phosphate + phosphate. The protein operates within carbohydrate biosynthesis; gluconeogenesis. The chain is Fructose-1,6-bisphosphatase class 1 from Aromatoleum aromaticum (strain DSM 19018 / LMG 30748 / EbN1) (Azoarcus sp. (strain EbN1)).